Here is a 568-residue protein sequence, read N- to C-terminus: Phosphoprotein (568 aa).

The disordered stretch occupies residues 1–24 (MDQDAFFFERDPEAEGEAPRKQES). Basic and acidic residues predominate over residues 7–24 (FFERDPEAEGEAPRKQES). Positions 33–41 (DVVLSYKPT) are N0 binding. Residues 45-324 (EDRSWLHNII…SNEEGTSNTS (280 aa)) are disordered. Basic and acidic residues-rich tracts occupy residues 56–105 (NPKE…HARI), 129–144 (GDER…PNER), and 151–167 (PTDE…KREE). Over residues 179–216 (GSTSLSDDGEGRTNNNGRSMETSSTHSTRITDVITNPS) the composition is skewed to polar residues. Residues 239 to 253 (TRSERTQNSELHKST) show a composition bias toward basic and acidic residues. A compositionally biased stretch (low complexity) spans 295 to 304 (TTNNANNNAK). A multimerization region spans residues 344–411 (FELSRRASHQ…SSRDLHKRFS (68 aa)). Residues 387–416 (EENRTLLKQIQEEIDSSRDLHKRFSEYQKE) are a coiled coil. The interval 412 to 445 (EYQKEQNSLMMANLSTLHIITDRGGKTGDPSDTT) is l protein binding. Disordered stretches follow at residues 434-455 (RGGK…TKGK) and 493-513 (PVLE…LIPS). Residues 441–450 (PSDTTRSPSV) are compositionally biased toward polar residues. The interval 479-568 (DLIREDELRE…FEEDIDSLTN (90 aa)) is interaction with the nucleocapsid (N-RNA).

It belongs to the respirovirus P protein family. As to quaternary structure, homotetramer. Interacts (via multimerization domain) with polymerase L; this interaction forms the polymerase complex. Interacts (via N-terminus) with N0; this interaction allows P to chaperon N0 before encapsidation and form the N-P complex. Interacts (via C-terminus) with N-RNA template; this interaction positions the polymerase on the template.

Functionally, essential cofactor of the RNA polymerase L that plays a central role in the transcription and replication by forming the polymerase complex with RNA polymerase L and recruiting L to the genomic N-RNA template for RNA synthesis. Also plays a central role in the encapsidation of nascent RNA chains by forming the encapsidation complex with the nucleocapsid protein N (N-P complex). Acts as a chaperone for newly synthesized free N protein, so-called N0, allowing encapsidation of nascent RNA chains during replication. The nucleoprotein protein N prevents excessive phosphorylation of P, which leads to down-regulation of viral transcription/ replication. Participates, together with N, in the formation of viral factories (viroplasms), which are large inclusions in the host cytoplasm where replication takes place. Recruits host PI4KB and remodel the host endoplasmic reticulum membrane to form viral replication factories. The protein is Phosphoprotein (P/C) of Homo sapiens (Human).